We begin with the raw amino-acid sequence, 366 residues long: Left-right determination factor 1 (366 aa).

An N-terminal signal peptide occupies residues 1–21 (MQPLWLCWALWVLPLASPGAA). A propeptide spans 22 to 76 (LTGEQLLGSLLRQLQLKEVPTLDRADMEELVIPTHVRAQYVALLQRSHGDRSRGK) (or 135). Asparagine 158 carries N-linked (GlcNAc...) asparagine glycosylation. 4 disulfides stabilise this stretch: cysteine 251-cysteine 264, cysteine 263-cysteine 316, cysteine 293-cysteine 351, and cysteine 297-cysteine 353.

The protein belongs to the TGF-beta family. Post-translationally, the processing of the protein may also occur at the second R-X-X-R site located at AA 132-135. Processing appears to be regulated in a cell-type specific manner.

The protein localises to the secreted. Functionally, required for left-right axis determination as a regulator of LEFTY2 and NODAL. The chain is Left-right determination factor 1 (LEFTY1) from Homo sapiens (Human).